The following is a 288-amino-acid chain: Polyisoprenoid diphosphate/phosphate phosphohydrolase PLPP6 (288 aa).

Positions 1 to 82 are disordered; it reads MPSPKARSGS…STGGGGQQLP (82 aa). Over 1-127 the chain is Cytoplasmic; sequence MPSPKARSGS…EDSSWGSVRP (127 aa). The helical transmembrane segment at 128–148 threads the bilayer; sequence LMKLIEVSGHGIPWLAGAAYC. Residues 149–161 lie on the Lumenal side of the membrane; it reads LYKSDSPAGQEVM. Residues 162-182 form a helical membrane-spanning segment; it reads LNLLMALVLDVVLVGVLKAVV. A phosphatase sequence motif I region spans residues 179-187; sequence KAVVRRRRP. Residues 183-223 are Cytoplasmic-facing; that stretch reads RRRRPAHNRMDMFATFSVDSYSFPSGHATRAAMCARFLLNH. The phosphatase sequence motif II stretch occupies residues 206–209; the sequence is PSGH. Catalysis depends on histidine 209, which acts as the Proton donors. The chain crosses the membrane as a helical span at residues 224–244; sequence LVLAAPLRVLVLLWATIVGFS. The phosphatase sequence motif III stretch occupies residues 244–255; the sequence is SRVLLGRHNVTD. Over 245 to 255 the chain is Lumenal; sequence RVLLGRHNVTD. Histidine 251 (nucleophile) is an active-site residue. A helical transmembrane segment spans residues 256-276; it reads VAFGFFMGYWQYNLVEMLWLS. Over 277 to 288 the chain is Cytoplasmic; that stretch reads PVMLQSAIGQLH.

The protein belongs to the PA-phosphatase related phosphoesterase family.

It localises to the endoplasmic reticulum membrane. Its subcellular location is the nucleus envelope. It is found in the nucleus inner membrane. It carries out the reaction presqualene diphosphate + H2O = presqualene phosphate + phosphate + H(+). The enzyme catalyses presqualene phosphate + H2O = presqualene alcohol + phosphate. The catalysed reaction is (2E,6E)-farnesyl diphosphate + H2O = (2E,6E)-farnesyl phosphate + phosphate + H(+). It catalyses the reaction (2E,6E)-farnesyl phosphate + H2O = (2E,6E)-farnesol + phosphate. It carries out the reaction (2E,6E,10E)-geranylgeranyl diphosphate + H2O = (2E,6E,10E)-geranylgeranyl phosphate + phosphate + H(+). The enzyme catalyses (2E,6E,10E)-geranylgeranyl phosphate + H2O = (2E,6E,10E)-geranylgeraniol + phosphate. The catalysed reaction is (2E)-geranyl diphosphate + H2O = (2E)-geranyl phosphate + phosphate + H(+). It catalyses the reaction (2E)-geranyl phosphate + H2O = (2E)-geraniol + phosphate. It carries out the reaction 1,2-dihexadecanoyl-sn-glycero-3-phosphate + H2O = 1,2-dihexadecanoyl-sn-glycerol + phosphate. Magnesium-independent polyisoprenoid diphosphatase that catalyzes the sequential dephosphorylation of presqualene, farnesyl, geranyl and geranylgeranyl diphosphates. May regulate the biosynthesis of cholesterol and related sterols by dephosphorylating presqualene and farnesyl diphosphate, two key intermediates in this biosynthetic pathway. May also play a role in protein prenylation by acting on farnesyl diphosphate and its derivative geranylgeranyl diphosphate, two precursors for the addition of isoprenoid anchors to membrane proteins. Has a lower activity towards phosphatidic acid (PA), but through phosphatidic acid dephosphorylation may participate in the biosynthesis of phospholipids and triacylglycerols. May also act on ceramide-1-P, lysophosphatidic acid (LPA) and sphing-4-enine 1-phosphate/sphingosine-1-phosphate. This Danio rerio (Zebrafish) protein is Polyisoprenoid diphosphate/phosphate phosphohydrolase PLPP6 (plpp6).